Reading from the N-terminus, the 404-residue chain is Spore development regulator RYP2 (404 aa).

Disordered stretches follow at residues 1-46 (MSAP…RKAV), 200-231 (LLKR…SSQQ), and 382-404 (SGQS…PAWG). A Velvet domain is found at 17-194 (LQSADFRLTV…ADQGVKLRIR (178 aa)). Residues 29-46 (NPERARVAGGKEKERKAV) show a composition bias toward basic and acidic residues. Positions 382 to 397 (SGQSFSQSAGHMQSPS) are enriched in polar residues.

This sequence belongs to the velvet family. VosA subfamily. Forms a heterodimeric complex with RYP3; the formation of the RYP2-RYP3 complex is light-dependent.

Its subcellular location is the nucleus. Functionally, component of the RYP2-RYP3 heterodimeric complex that plays a dual role in activating genes associated with spore maturation and repressing certain development-associated genes. The complex binds DNA through the DNA-binding domain of vosA that recognizes an 11-nucleotide consensus sequence 5'-CTGGCCGCGGC-3' consisting of two motifs in the promoters of key developmental regulatory genes. Required for viable spore production and regulation of sporulation in response to temperature and for the switch to yeast-form in the presence of host cells. This Ajellomyces capsulatus (Darling's disease fungus) protein is Spore development regulator RYP2.